Here is a 208-residue protein sequence, read N- to C-terminus: Cysteine-rich protein 2 (208 aa).

Residues 5–57 form the LIM zinc-binding 1 domain; it reads CPKCDKTVYFAEKVSSLGKDWHRFCLRCEHCSKTLTPGGHAEHDGKPFCHKPC. N6-acetyllysine is present on Lys-23. Residues 98 to 117 form a disordered region; sequence TEERKASGPPKGPSKASSVT. Ser-104 carries the post-translational modification Phosphoserine. A compositionally biased stretch (low complexity) spans 104–115; that stretch reads SGPPKGPSKASS. In terms of domain architecture, LIM zinc-binding 2 spans 126 to 178; it reads CPRCNKRVYFAEKVTSLGKDWHRPCLRCERCGKTLTPGGHAEHDGQPYCHKPC. Residues Lys-138 and Lys-144 each carry the N6-acetyllysine modification.

Interacts with TGFB1I1.

In Bos taurus (Bovine), this protein is Cysteine-rich protein 2 (CRIP2).